The following is a 496-amino-acid chain: Acetyl-coenzyme A carboxylase carboxyl transferase subunit beta, chloroplastic (496 aa).

Positions 229–496 constitute a CoA carboxyltransferase N-terminal domain; the sequence is LWVQCENCYG…FFPLNKNFIK (268 aa). Zn(2+) is bound by residues Cys-233, Cys-236, Cys-252, and Cys-255. The segment at 233–255 adopts a C4-type zinc-finger fold; it reads CENCYGLNYKKFFRLKLHICEQC.

This sequence belongs to the AccD/PCCB family. Acetyl-CoA carboxylase is a heterohexamer composed of biotin carboxyl carrier protein, biotin carboxylase and 2 subunits each of ACCase subunit alpha and ACCase plastid-coded subunit beta (accD). Zn(2+) serves as cofactor.

It is found in the plastid. Its subcellular location is the chloroplast stroma. The catalysed reaction is N(6)-carboxybiotinyl-L-lysyl-[protein] + acetyl-CoA = N(6)-biotinyl-L-lysyl-[protein] + malonyl-CoA. It functions in the pathway lipid metabolism; malonyl-CoA biosynthesis; malonyl-CoA from acetyl-CoA: step 1/1. Its function is as follows. Component of the acetyl coenzyme A carboxylase (ACC) complex. Biotin carboxylase (BC) catalyzes the carboxylation of biotin on its carrier protein (BCCP) and then the CO(2) group is transferred by the transcarboxylase to acetyl-CoA to form malonyl-CoA. The protein is Acetyl-coenzyme A carboxylase carboxyl transferase subunit beta, chloroplastic of Ranunculus macranthus (Large buttercup).